We begin with the raw amino-acid sequence, 286 residues long: Thymidylate synthase (286 aa).

R140–R141 is a dUMP binding site. The active-site Nucleophile is C161. Residues R185–D188, N196, and H226–Y228 each bind dUMP. D188 provides a ligand contact to (6R)-5,10-methylene-5,6,7,8-tetrahydrofolate. A285 provides a ligand contact to (6R)-5,10-methylene-5,6,7,8-tetrahydrofolate.

It belongs to the thymidylate synthase family. Bacterial-type ThyA subfamily. Homodimer.

The protein resides in the cytoplasm. The enzyme catalyses dUMP + (6R)-5,10-methylene-5,6,7,8-tetrahydrofolate = 7,8-dihydrofolate + dTMP. It functions in the pathway pyrimidine metabolism; dTTP biosynthesis. Its function is as follows. Catalyzes the reductive methylation of 2'-deoxyuridine-5'-monophosphate (dUMP) to 2'-deoxythymidine-5'-monophosphate (dTMP) while utilizing 5,10-methylenetetrahydrofolate (mTHF) as the methyl donor and reductant in the reaction, yielding dihydrofolate (DHF) as a by-product. This enzymatic reaction provides an intracellular de novo source of dTMP, an essential precursor for DNA biosynthesis. The polypeptide is Thymidylate synthase (Streptococcus thermophilus (strain CNRZ 1066)).